Here is an 88-residue protein sequence, read N- to C-terminus: Defensin-like protein 267 (88 aa).

The signal sequence occupies residues 1-23 (MMLSKVVLLALLLSLSCLWVAKA). 3 disulfides stabilise this stretch: C45-C63, C51-C68, and C55-C70.

Belongs to the DEFL family.

Its subcellular location is the secreted. This is Defensin-like protein 267 from Arabidopsis thaliana (Mouse-ear cress).